Here is a 91-residue protein sequence, read N- to C-terminus: RNA-binding protein Hfq (91 aa).

In terms of domain architecture, Sm spans Asp9–Val68. A disordered region spans residues Ser69–Glu91.

Belongs to the Hfq family. In terms of assembly, homohexamer.

RNA chaperone that binds small regulatory RNA (sRNAs) and mRNAs to facilitate mRNA translational regulation in response to envelope stress, environmental stress and changes in metabolite concentrations. Also binds with high specificity to tRNAs. This chain is RNA-binding protein Hfq, found in Haemophilus influenzae (strain ATCC 51907 / DSM 11121 / KW20 / Rd).